A 363-amino-acid polypeptide reads, in one-letter code: tRNA N6-adenosine threonylcarbamoyltransferase (363 aa).

Fe cation is bound by residues His117 and His121. Substrate is bound by residues 139–143, Asp172, Gly185, and Asn287; that span reads LVSGG. Position 315 (Asp315) interacts with Fe cation.

This sequence belongs to the KAE1 / TsaD family. Fe(2+) serves as cofactor.

Its subcellular location is the cytoplasm. The enzyme catalyses L-threonylcarbamoyladenylate + adenosine(37) in tRNA = N(6)-L-threonylcarbamoyladenosine(37) in tRNA + AMP + H(+). Its function is as follows. Required for the formation of a threonylcarbamoyl group on adenosine at position 37 (t(6)A37) in tRNAs that read codons beginning with adenine. Is involved in the transfer of the threonylcarbamoyl moiety of threonylcarbamoyl-AMP (TC-AMP) to the N6 group of A37, together with TsaE and TsaB. TsaD likely plays a direct catalytic role in this reaction. The polypeptide is tRNA N6-adenosine threonylcarbamoyltransferase (Cereibacter sphaeroides (strain ATCC 17025 / ATH 2.4.3) (Rhodobacter sphaeroides)).